We begin with the raw amino-acid sequence, 307 residues long: Potassium channel subfamily K member 7 (307 aa).

Residues 1–10 (MGGLRPWSRY) are Cytoplasmic-facing. A helical transmembrane segment spans residues 11–31 (GLLVVAHLLALGLGAVVFQAL). The N-linked (GlcNAc...) asparagine glycan is linked to Asn83. Residues 92–119 (LPSALLFAASILTTTGYGHMAPLSPGGK) constitute an intramembrane region (pore-forming). A helical membrane pass occupies residues 120 to 140 (AFCMVYAALGLPASLALVATL). Topologically, residues 141–170 (RHCLLPVLSRPRAWVAVHWQLSPARAALLQ) are cytoplasmic. The chain crosses the membrane as a helical span at residues 171–191 (AVALGLLVASSFVLLPALVLW). An intramembrane region (pore-forming) is located at residues 199 to 227 (LLGAVYFCFSSLSTIGLEDLLPGRGRSLH). The chain crosses the membrane as a helical span at residues 233–253 (LGQLALLGYLLLGLLAMLLAV). The Cytoplasmic segment spans residues 254–307 (ETFSELPQVRAMGKFFRPSGPVTAEDQGGILGQDELALSTLPPAAPASGQAPAC).

It belongs to the two pore domain potassium channel (TC 1.A.1.8) family. Homodimer.

Its subcellular location is the membrane. Functionally, probable potassium channel subunit. No channel activity observed in vitro as protein remains in the endoplasmic reticulum. May need to associate with an as yet unknown partner in order to reach the plasma membrane. This chain is Potassium channel subfamily K member 7 (KCNK7), found in Homo sapiens (Human).